The sequence spans 133 residues: Large-conductance mechanosensitive channel (133 aa).

The next 2 membrane-spanning stretches (helical) occupy residues 10-30 (FAMK…TAFG) and 76-96 (GNFI…FCVI).

Belongs to the MscL family. Homopentamer.

It is found in the cell inner membrane. Its function is as follows. Channel that opens in response to stretch forces in the membrane lipid bilayer. May participate in the regulation of osmotic pressure changes within the cell. This chain is Large-conductance mechanosensitive channel, found in Campylobacter curvus (strain 525.92).